The following is a 378-amino-acid chain: Rhodopsin (378 aa).

The Extracellular portion of the chain corresponds to 1–53; that stretch reads MMSIASGPSHAAYTWASQGGGFGNQTVVDKVPPEMLHMVDAHWYQFPPMNPLW. Asparagine 24 carries an N-linked (GlcNAc...) asparagine glycan. The chain crosses the membrane as a helical span at residues 54-78; sequence HALLGFVIGVLGVISVIGNGMVIYI. Residues 79-90 lie on the Cytoplasmic side of the membrane; sequence FTTTKSLRTPSN. The helical transmembrane segment at 91–115 threads the bilayer; sequence LLVVNLAISDFLMMLCMSPAMVINC. The Extracellular segment spans residues 116–130; sequence YYETWVLGPLFCELY. An intrachain disulfide couples cysteine 127 to cysteine 204. A helical membrane pass occupies residues 131 to 150; sequence GLAGSLFGCASIWTMTMIAF. The Cytoplasmic segment spans residues 151–169; the sequence is DRYNVIVKGLSAKPMTING. Residues 170-193 traverse the membrane as a helical segment; the sequence is ALIRILTIWFFTLAWTIAPMFGWN. Topologically, residues 194 to 217 are extracellular; it reads RYVPEGNMTACGTDYLTKDLFSRS. Asparagine 200 is a glycosylation site (N-linked (GlcNAc...) asparagine). A helical membrane pass occupies residues 218-245; it reads YILIYSIFVYFTPLFLIIYSYFFIIQAV. Residues 246–280 lie on the Cytoplasmic side of the membrane; that stretch reads AAHEKNMREQAKKMNVASLRSAENQSTSAECKLAK. Residues 281–304 form a helical membrane-spanning segment; it reads VALMTISLWFMAWTPYLVINYSGI. Topologically, residues 305 to 311 are extracellular; the sequence is FETTKIS. Residues 312–336 form a helical membrane-spanning segment; the sequence is PLFTIWGSLFAKANAVYNPIVYGIS. Lysine 323 carries the N6-(retinylidene)lysine modification. The Cytoplasmic segment spans residues 337-378; the sequence is HPKYRAALFQKFPSLACTTEPTGADTMSTTTTVTEGNEKPAA.

The protein belongs to the G-protein coupled receptor 1 family. Opsin subfamily. In terms of processing, phosphorylated on some or all of the serine and threonine residues present in the C-terminal region.

It localises to the membrane. Its function is as follows. Visual pigments are the light-absorbing molecules that mediate vision. They consist of an apoprotein, opsin, covalently linked to cis-retinal. The sequence is that of Rhodopsin from Camponotus atriceps (Florida carpenter ant).